Reading from the N-terminus, the 279-residue chain is Large ribosomal subunit protein uL2 (279 aa).

The interval 223–279 is disordered; that stretch reads VAMNPIDHPHGGGEGRTSGGRHPVTPWGKGTKGTRTRSNKSTDKYILRSRHAKKKGR. The segment covering 269–279 has biased composition (basic residues); the sequence is LRSRHAKKKGR.

It belongs to the universal ribosomal protein uL2 family. Part of the 50S ribosomal subunit. Forms a bridge to the 30S subunit in the 70S ribosome.

Functionally, one of the primary rRNA binding proteins. Required for association of the 30S and 50S subunits to form the 70S ribosome, for tRNA binding and peptide bond formation. It has been suggested to have peptidyltransferase activity; this is somewhat controversial. Makes several contacts with the 16S rRNA in the 70S ribosome. This chain is Large ribosomal subunit protein uL2, found in Paracoccus denitrificans (strain Pd 1222).